Here is a 584-residue protein sequence, read N- to C-terminus: Interferon regulatory factor 2-binding protein 1 (584 aa).

The interval 60-127 (VLPEGRSPGP…SGRLPLPSPA (68 aa)) is disordered. 2 positions are modified to phosphoserine: S66 and S125. Position 177 is an omega-N-methylarginine (R177). S186 carries the post-translational modification Phosphoserine. Residues 197–217 (EKEKQQRNADCLAELNEAMRG) adopt a coiled-coil conformation. Residue K227 forms a Glycyl lysine isopeptide (Lys-Gly) (interchain with G-Cter in SUMO2) linkage. Residues 346 to 420 (PAEALPQQYP…PYSAETPGVP (75 aa)) are disordered. The segment covering 354-369 (YPEPAPAALCGPPPRA) has biased composition (pro residues). A phosphoserine mark is found at S371, S384, S421, and S436. Residues 433–495 (LGHSPKDPGG…VSGGGSGTGA (63 aa)) are disordered. K438 participates in a covalent cross-link: Glycyl lysine isopeptide (Lys-Gly) (interchain with G-Cter in SUMO2). Residues 449-463 (AGGASPAASSTAQPP) show a composition bias toward low complexity. Phosphoserine is present on residues S453 and S457. An RING-type; degenerate zinc finger spans residues 503 to 550 (CTLCRERLEDTHFVQCPSVPGHKFCFPCSREFIKAQGPAGEVYCPSGD). The cys-rich stretch occupies residues 503–550 (CTLCRERLEDTHFVQCPSVPGHKFCFPCSREFIKAQGPAGEVYCPSGD).

It belongs to the IRF2BP family. As to quaternary structure, interacts with IRF2. Part of a corepressor complex containing IRF2 and IRF2BP2. Interacts with JDP2.

Its subcellular location is the nucleus. The enzyme catalyses S-ubiquitinyl-[E2 ubiquitin-conjugating enzyme]-L-cysteine + [acceptor protein]-L-lysine = [E2 ubiquitin-conjugating enzyme]-L-cysteine + N(6)-ubiquitinyl-[acceptor protein]-L-lysine.. Functionally, acts as a transcriptional corepressor in a IRF2-dependent manner; this repression is not mediated by histone deacetylase activities. May act as an E3 ligase towards JDP2, enhancing its polyubiquitination. Represses ATF2-dependent transcriptional activation. This Homo sapiens (Human) protein is Interferon regulatory factor 2-binding protein 1 (IRF2BP1).